We begin with the raw amino-acid sequence, 427 residues long: Serine hydroxymethyltransferase (427 aa).

Residues L118 and 122-124 (GHL) each bind (6S)-5,6,7,8-tetrahydrofolate. The residue at position 227 (K227) is an N6-(pyridoxal phosphate)lysine. Residue 351–353 (SPF) coordinates (6S)-5,6,7,8-tetrahydrofolate.

Belongs to the SHMT family. Homodimer. It depends on pyridoxal 5'-phosphate as a cofactor.

It is found in the cytoplasm. It carries out the reaction (6R)-5,10-methylene-5,6,7,8-tetrahydrofolate + glycine + H2O = (6S)-5,6,7,8-tetrahydrofolate + L-serine. The protein operates within one-carbon metabolism; tetrahydrofolate interconversion. It participates in amino-acid biosynthesis; glycine biosynthesis; glycine from L-serine: step 1/1. Catalyzes the reversible interconversion of serine and glycine with tetrahydrofolate (THF) serving as the one-carbon carrier. This reaction serves as the major source of one-carbon groups required for the biosynthesis of purines, thymidylate, methionine, and other important biomolecules. Also exhibits THF-independent aldolase activity toward beta-hydroxyamino acids, producing glycine and aldehydes, via a retro-aldol mechanism. This is Serine hydroxymethyltransferase from Thermotoga petrophila (strain ATCC BAA-488 / DSM 13995 / JCM 10881 / RKU-1).